The following is a 1010-amino-acid chain: BrkA autotransporter (1010 aa).

The signal sequence occupies residues 1-42 (MYLDRFRQCPSSLQIPRSAWRLHALAAALALAGMARLAPAAA). In terms of domain architecture, Autotransporter spans 742 to 1010 (LRADAGGPWA…SFHAGYRYSF (269 aa)).

Its subcellular location is the periplasm. The protein localises to the secreted. It is found in the cell surface. The protein resides in the cell outer membrane. In terms of biological role, inhibits the classical pathway of complement activation and prevents accumulation of deposited C4. The sequence is that of BrkA autotransporter from Bordetella pertussis (strain Tohama I / ATCC BAA-589 / NCTC 13251).